Here is a 153-residue protein sequence, read N- to C-terminus: Protein-export protein SecB (153 aa).

The protein belongs to the SecB family. In terms of assembly, homotetramer, a dimer of dimers. One homotetramer interacts with 1 SecA dimer.

Its subcellular location is the cytoplasm. In terms of biological role, one of the proteins required for the normal export of preproteins out of the cell cytoplasm. It is a molecular chaperone that binds to a subset of precursor proteins, maintaining them in a translocation-competent state. It also specifically binds to its receptor SecA. The protein is Protein-export protein SecB of Erwinia tasmaniensis (strain DSM 17950 / CFBP 7177 / CIP 109463 / NCPPB 4357 / Et1/99).